The chain runs to 342 residues: 11-beta-hydroxysteroid dehydrogenase-like 6 (342 aa).

Residues 10-30 (FLFPLLTLYALLVFYPTYQRL) form a helical; Signal-anchor for type II membrane protein membrane-spanning segment. NADP(+) is bound by residues 54–80 (GAAS…VDIR) and D105. S184 contributes to the substrate binding site. Catalysis depends on Y197, which acts as the Proton acceptor. Residues 197 to 201 (YCASK) and K201 each bind NADP(+).

It belongs to the short-chain dehydrogenases/reductases (SDR) family.

It is found in the membrane. This chain is 11-beta-hydroxysteroid dehydrogenase-like 6 (HSD6), found in Arabidopsis thaliana (Mouse-ear cress).